A 416-amino-acid polypeptide reads, in one-letter code: Lipid III flippase (416 aa).

Topologically, residues M1 to K17 are cytoplasmic. A helical membrane pass occupies residues I18–G38. Residues L39–Q45 are Periplasmic-facing. The chain crosses the membrane as a helical span at residues L46–V66. The Cytoplasmic segment spans residues A67–S84. Residues A85 to I105 traverse the membrane as a helical segment. Residues S106 to L121 lie on the Periplasmic side of the membrane. Residues V122–F142 traverse the membrane as a helical segment. At R143–D144 the chain is on the cytoplasmic side. A helical transmembrane segment spans residues A145 to V165. At S166–G174 the chain is on the periplasmic side. The helical transmembrane segment at A175–I195 threads the bilayer. The Cytoplasmic segment spans residues K196–Q216. A helical transmembrane segment spans residues L217–M237. The Periplasmic segment spans residues M238 to S259. Residues I260–L280 form a helical membrane-spanning segment. Residues S281 to P302 are Cytoplasmic-facing. The chain crosses the membrane as a helical span at residues A303–L323. Residues S324–F334 are Periplasmic-facing. The chain crosses the membrane as a helical span at residues A335–I355. At A356–Q370 the chain is on the cytoplasmic side. The next 2 membrane-spanning stretches (helical) occupy residues F371–A391 and Q392–W412. Residues R413–A416 are Cytoplasmic-facing.

It belongs to the polysaccharide transport (PST) (TC 2.A.66.2) family. Probably part of a complex composed of WzxE, WzyE and WzzE.

It is found in the cell inner membrane. The protein operates within bacterial outer membrane biogenesis; enterobacterial common antigen biosynthesis. Mediates the transbilayer movement of Und-PP-GlcNAc-ManNAcA-Fuc4NAc (lipid III) from the inner to the outer leaflet of the cytoplasmic membrane during the assembly of enterobacterial common antigen (ECA). Required for the assembly of the phosphoglyceride-linked form of ECA (ECA(PG)) and the water-soluble cyclic form of ECA (ECA(CYC)). Could also mediate the translocation of Und-PP-GlcNAc. The protein is Lipid III flippase of Escherichia coli (strain K12).